The primary structure comprises 433 residues: ATP-dependent protease ATPase subunit HslU (433 aa).

ATP-binding positions include Val18, 60 to 65 (GVGKTE), Asp246, Glu311, and Arg383.

The protein belongs to the ClpX chaperone family. HslU subfamily. As to quaternary structure, a double ring-shaped homohexamer of HslV is capped on each side by a ring-shaped HslU homohexamer. The assembly of the HslU/HslV complex is dependent on binding of ATP.

Its subcellular location is the cytoplasm. Functionally, ATPase subunit of a proteasome-like degradation complex; this subunit has chaperone activity. The binding of ATP and its subsequent hydrolysis by HslU are essential for unfolding of protein substrates subsequently hydrolyzed by HslV. HslU recognizes the N-terminal part of its protein substrates and unfolds these before they are guided to HslV for hydrolysis. This is ATP-dependent protease ATPase subunit HslU from Rhodopseudomonas palustris (strain BisB5).